Here is a 554-residue protein sequence, read N- to C-terminus: Valerianol synthase TPS1B (554 aa).

Residues D307 and D311 each coordinate Mg(2+). A DDXXD motif motif is present at residues 326-330; that stretch reads VQRWD. The Mg(2+) site is built by D452, S456, and E460.

This sequence belongs to the terpene synthase family. It depends on Mg(2+) as a cofactor.

It carries out the reaction (2E,6E)-farnesyl diphosphate + H2O = valerianol + diphosphate. It participates in secondary metabolite biosynthesis; terpenoid biosynthesis. Functionally, terpene synthase that catalyzes the biosynthesis of the terpene valerianol, which is a volatile compound of floral scent. This chain is Valerianol synthase TPS1B, found in Camellia hiemalis (Camellia).